The primary structure comprises 232 residues: MPRFEAQKSSMVPYHIRQYQDSDHKRVVDVFTTGAEEYIPSTFRHVLRLPRTFLLLLGVPLALVLVSGSWILAVICIFFLLLLLRLLARQPWKEYVAKCLQTYMVDITKSYLNVHGACFWVAESGGQVVGIVAAQPVKDPPLGRKQLQLFRLSVSSQHRGQGIAKALTRTVLQFARDQSYSDVVLETSTLQQGAMTLYLGMGFKKTGQYFKSMFWRLVDICFIQLNYSFPSA.

At M1–A62 the chain is on the cytoplasmic side. A helical; Signal-anchor for type II membrane protein membrane pass occupies residues L63–L83. An N-acetyltransferase domain is found at F79–Q224. Over L84–A232 the chain is Lumenal. The residue at position 109 (K109) is an N6-acetyllysine.

This sequence belongs to the NAT8 family. Acetylation on Lys-109 modulates enzymatic activity. In terms of tissue distribution, expressed in brain (at protein level).

It localises to the endoplasmic reticulum-Golgi intermediate compartment membrane. The protein localises to the endoplasmic reticulum membrane. The enzyme catalyses L-lysyl-[protein] + acetyl-CoA = N(6)-acetyl-L-lysyl-[protein] + CoA + H(+). Endoplasmic reticulum (ER)-membrane-bound lysine N-acetyltransferase catalyzing the N6-acetylation of lysine residues in the lumen of the ER in various proteins, including PROM1 and BACE1, using acetyl-CoA as acetyl donor. Thereby, may regulate apoptosis through the acetylation and the regulation of the expression of PROM1. Acetylates and stabilizes BACE1 immature protein, leading to increased steady-state levels in neurons. By acting on BACE1 expression, may regulate amyloid beta-peptide formation. N(6)-lysine acetylation in ER maintains protein homeostasis and regulates reticulophagy. The sequence is that of N-acetyltransferase 8B from Mus musculus (Mouse).